The sequence spans 344 residues: AA9 family lytic polysaccharide monooxygenase D (344 aa).

The N-terminal stretch at 1–23 (MKTATSYAAFLLSALAALPHASA) is a signal peptide. Cu(2+) is bound at residue His24. Cysteines 70 and 193 form a disulfide. Residue His179 participates in O2 binding. Tyr190 contributes to the Cu(2+) binding site. 2 N-linked (GlcNAc...) asparagine glycosylation sites follow: Asn201 and Asn207. A disordered region spans residues 240 to 321 (PPLSNLVSGD…PTTSGNLSAN (82 aa)). Low complexity predominate over residues 259–292 (STSSATLSGGAAPTGTASGSTPAGTSQPSSTTGT). The span at 311 to 320 (APTTSGNLSA) shows a compositional bias: polar residues. An N-linked (GlcNAc...) asparagine glycan is attached at Asn317.

It belongs to the polysaccharide monooxygenase AA9 family. The cofactor is Cu(2+).

Its subcellular location is the secreted. The catalysed reaction is [(1-&gt;4)-beta-D-glucosyl]n+m + reduced acceptor + O2 = 4-dehydro-beta-D-glucosyl-[(1-&gt;4)-beta-D-glucosyl]n-1 + [(1-&gt;4)-beta-D-glucosyl]m + acceptor + H2O.. Its function is as follows. Lytic polysaccharide monooxygenase (LPMO) that depolymerizes crystalline and amorphous polysaccharides via the oxidation of scissile alpha- or beta-(1-4)-glycosidic bonds, yielding C1 or C4 oxidation products. Catalysis by LPMOs requires the reduction of the active-site copper from Cu(II) to Cu(I) by a reducing agent and H(2)O(2) or O(2) as a cosubstrate. The chain is AA9 family lytic polysaccharide monooxygenase D from Gloeophyllum trabeum (strain ATCC 11539 / FP-39264 / Madison 617) (Brown rot fungus).